The primary structure comprises 860 residues: Protein argonaute-2 (860 aa).

Y2 carries the post-translational modification 3'-nitrotyrosine. The 120-residue stretch at 230 to 349 (PVIEFVCEVL…LPLEVCNIVA (120 aa)) folds into the PAZ domain. The tract at residues 312–317 (YFKDRH) is interaction with guide RNA. S388 carries the phosphoserine modification. A Piwi domain is found at 518–819 (LVVVILPGKT…VAFRARYHLV (302 aa)). An interaction with guide RNA region spans residues 525–567 (GKTPVYAEVKRVGDTVLGMATQCVQMKNVQRTTPQTLSNLCLK). Residues 588-591 (FQQP) are interaction with GW182 family members. D598 is a binding site for a divalent metal cation. The interval 651–661 (LIQFYKSTRFK) is interaction with GW182 family members. Residue D670 participates in a divalent metal cation binding. The residue at position 701 (P701) is a 4-hydroxyproline. 3 interaction with guide RNA regions span residues 710–711 (KR), 754–762 (HAGIQGTSR), and 791–813 (YVRCTRSVSIPAPAYYAHLVAFR). A divalent metal cation is bound at residue H808. Residues S825, S829, S832, and S835 each carry the phosphoserine modification.

Belongs to the argonaute family. Ago subfamily. In terms of assembly, interacts with DICER1 through its Piwi domain and with TARBP2 during assembly of the RNA-induced silencing complex (RISC). Together, DICER1, AGO2 and TARBP2 constitute the trimeric RISC loading complex (RLC), or micro-RNA (miRNA) loading complex (miRLC). Within the RLC/miRLC, DICER1 and TARBP2 are required to process precursor miRNAs (pre-miRNAs) to mature miRNAs and then load them onto AGO2. AGO2 bound to the mature miRNA constitutes the minimal RISC and may subsequently dissociate from DICER1 and TARBP2. Note however that the term RISC has also been used to describe the trimeric RLC/miRLC. The formation of RISC complexes containing siRNAs rather than miRNAs appears to occur independently of DICER1. Interacts with AGO1. Also interacts with DDB1, DDX5, DDX6, DDX20, DHX30, DHX36, DDX47, DHX9, ELAVL, FXR1, GEMIN4, HNRNPF, IGF2BP1, ILF3, IMP8, MATR3, PABPC1, PRMT5, P4HA1, P4HB, RBM4, SART3, TNRC6A, TNRC6B, UPF1 and YBX1. Interacts with the P-body components DCP1A and XRN1. Associates with polysomes and messenger ribonucleoproteins (mNRPs). Interacts with RBM4; the interaction is modulated under stress-induced conditions, occurs under both cell proliferation and differentiation conditions and in an RNA- and phosphorylation-independent manner. Interacts with LIMD1, WTIP and AJUBA. Interacts with TRIM71. Interacts with APOBEC3G in an RNA-dependent manner. Interacts with APOBEC3A, APOBEC3C, APOBEC3F and APOBEC3H. Interacts with DICER1, TARBP2, EIF6, MOV10 and RPL7A (60S ribosome subunit); they form a large RNA-induced silencing complex (RISC). Interacts with FMR1. Interacts with ZFP36. Interacts with RC3H1; the interaction is RNA independent. Interacts with ARB2A. Found in a complex composed of AGO2, CHD7 and ARB2A. Interacts with SND1 and SYT11. Interacts with CLNK. Interacts with GARRE1. Interacts with GRB2; this interaction is important for the formation of a ternary complex containing GRB2, AGO2 and DICER1. Mg(2+) is required as a cofactor. It depends on Mn(2+) as a cofactor. In terms of processing, hydroxylated. 4-hydroxylation appears to enhance protein stability but is not required for miRNA-binding or endonuclease activity. Ubiquitinated on surface-exposed lysines by a SCF-like E3 ubiquitin-protein ligase complex containing ZSWIM8 during target-directed microRNA degradation (TDMD), a process that mediates degradation of microRNAs (miRNAs). Ubiquitination by the SCF-like E3 ubiquitin-protein ligase complex containing ZSWIM8 leads to its subsequent degradation, thereby exposing miRNAs for degradation. ZSWIM8 recognizes and binds AGO2 when it is engaged with a TDMD target. Post-translationally, phosphorylation at Ser-388 by AKT3; leads to up-regulate translational repression of microRNA target and down-regulate endonucleolytic cleavage. In terms of processing, a phosphorylation cycle of C-terminal serine cluster (Ser-825-Ser-835) regulates the release of target mRNAs. Target-binding leads to phosphorylation of these residues by CSNK1A1, which reduces the affinity of AGO2 for mRNA and enables target release. The ANKRD52-PPP6C phosphatase complex dephosphorylates the residues, which primes AGO2 for binding a new target. Ubiquitous expression in 9.5 day embryos with highest levels in forebrain, heart, limb buds, and branchial arches.

It localises to the cytoplasm. It is found in the P-body. The protein resides in the nucleus. It catalyses the reaction Endonucleolytic cleavage to 5'-phosphomonoester.. Required for RNA-mediated gene silencing (RNAi) by the RNA-induced silencing complex (RISC). The 'minimal RISC' appears to include AGO2 bound to a short guide RNA such as a microRNA (miRNA) or short interfering RNA (siRNA). These guide RNAs direct RISC to complementary mRNAs that are targets for RISC-mediated gene silencing. The precise mechanism of gene silencing depends on the degree of complementarity between the miRNA or siRNA and its target. Binding of RISC to a perfectly complementary mRNA generally results in silencing due to endonucleolytic cleavage of the mRNA specifically by AGO2. Binding of RISC to a partially complementary mRNA results in silencing through inhibition of translation, and this is independent of endonuclease activity. May inhibit translation initiation by binding to the 7-methylguanosine cap, thereby preventing the recruitment of the translation initiation factor eIF4-E. May also inhibit translation initiation via interaction with EIF6, which itself binds to the 60S ribosomal subunit and prevents its association with the 40S ribosomal subunit. The inhibition of translational initiation leads to the accumulation of the affected mRNA in cytoplasmic processing bodies (P-bodies), where mRNA degradation may subsequently occur. In some cases RISC-mediated translational repression is also observed for miRNAs that perfectly match the 3' untranslated region (3'-UTR). Can also up-regulate the translation of specific mRNAs under certain growth conditions. Binds to the AU element of the 3'-UTR of the TNF (TNF-alpha) mRNA and up-regulates translation under conditions of serum starvation. Also required for transcriptional gene silencing (TGS), in which short RNAs known as antigene RNAs or agRNAs direct the transcriptional repression of complementary promoter regions. Regulates lymphoid and erythroid development and function, and this is independent of endonuclease activity. This chain is Protein argonaute-2 (Ago2), found in Mus musculus (Mouse).